Consider the following 219-residue polypeptide: tRNA (guanine-N(7)-)-methyltransferase (219 aa).

S-adenosyl-L-methionine is bound by residues Asp47, Glu72, Asn99, and Asp125. Asp125 is a catalytic residue. Substrate is bound by residues Lys129 and Asp161.

Belongs to the class I-like SAM-binding methyltransferase superfamily. TrmB family.

The enzyme catalyses guanosine(46) in tRNA + S-adenosyl-L-methionine = N(7)-methylguanosine(46) in tRNA + S-adenosyl-L-homocysteine. Its pathway is tRNA modification; N(7)-methylguanine-tRNA biosynthesis. Its function is as follows. Catalyzes the formation of N(7)-methylguanine at position 46 (m7G46) in tRNA. In Nostoc sp. (strain PCC 7120 / SAG 25.82 / UTEX 2576), this protein is tRNA (guanine-N(7)-)-methyltransferase.